Consider the following 449-residue polypeptide: Na(+)-translocating NADH-quinone reductase subunit A (449 aa).

This sequence belongs to the NqrA family. In terms of assembly, composed of six subunits; NqrA, NqrB, NqrC, NqrD, NqrE and NqrF.

It carries out the reaction a ubiquinone + n Na(+)(in) + NADH + H(+) = a ubiquinol + n Na(+)(out) + NAD(+). Functionally, NQR complex catalyzes the reduction of ubiquinone-1 to ubiquinol by two successive reactions, coupled with the transport of Na(+) ions from the cytoplasm to the periplasm. NqrA to NqrE are probably involved in the second step, the conversion of ubisemiquinone to ubiquinol. In Actinobacillus pleuropneumoniae serotype 5b (strain L20), this protein is Na(+)-translocating NADH-quinone reductase subunit A.